The sequence spans 368 residues: Protein L-Myc (368 aa).

3 disordered regions span residues 39–79 (PPTS…RGHS), 112–179 (RLAP…EKRR), and 218–295 (FPPE…FLER). Polar residues predominate over residues 135-147 (LEASNPAPATQCQ). Residues 247–258 (EEEEEEEEEEEI) show a composition bias toward acidic residues. Residues 283-294 (DVTKRKNHNFLE) are compositionally biased toward basic and acidic residues. The bHLH domain maps to 285-337 (TKRKNHNFLERKRRNDLRSRFLALRDQVPTLASCSKAPKVVILSKALEYLQAL). The tract at residues 337-365 (LVGAEKKMATEKRQLRCRQQQLQKRIAYL) is leucine-zipper.

In terms of assembly, efficient DNA binding requires dimerization with another bHLH protein. Binds DNA as a heterodimer with MAX.

It is found in the nucleus. In Mus musculus (Mouse), this protein is Protein L-Myc (Mycl).